Reading from the N-terminus, the 222-residue chain is Small ribosomal subunit protein eS1 (222 aa).

It belongs to the eukaryotic ribosomal protein eS1 family.

The polypeptide is Small ribosomal subunit protein eS1 (Pyrobaculum neutrophilum (strain DSM 2338 / JCM 9278 / NBRC 100436 / V24Sta) (Thermoproteus neutrophilus)).